The primary structure comprises 216 residues: MSARQPAIADTALVTAIDAVIEAGRRSAERGWVPATSGNFSVRVDAERIAVTRSGVDKGRLTPNDVLCQQLSQPLVAGSSAEAELHRRLYADDAEIGAVFHTHAVSATVLAQLHRGERLLTLSGWELQKALAGIRSHETVVEVPVVANDQDVVALANEVAARLAAPVAAGAVRAPGYLIAGHGLYAWGHTAVDAFRHLEALDVLFTQILTLRRHAS.

Histidine 101 and histidine 103 together coordinate Zn(2+).

This sequence belongs to the aldolase class II family. MtnB subfamily. Requires Zn(2+) as cofactor.

The enzyme catalyses 5-(methylsulfanyl)-D-ribulose 1-phosphate = 5-methylsulfanyl-2,3-dioxopentyl phosphate + H2O. It participates in amino-acid biosynthesis; L-methionine biosynthesis via salvage pathway; L-methionine from S-methyl-5-thio-alpha-D-ribose 1-phosphate: step 2/6. Functionally, catalyzes the dehydration of methylthioribulose-1-phosphate (MTRu-1-P) into 2,3-diketo-5-methylthiopentyl-1-phosphate (DK-MTP-1-P). The chain is Methylthioribulose-1-phosphate dehydratase from Bradyrhizobium sp. (strain BTAi1 / ATCC BAA-1182).